Reading from the N-terminus, the 112-residue chain is T cell receptor alpha variable 34 (112 aa).

A signal peptide spans 1–21 (METVLQVLLGILGFQAAWVSS). One can recognise an Ig-like domain in the interval 22 to 112 (QELEQSPQSL…HAGIYLCGAD (91 aa)). 2 N-linked (GlcNAc...) asparagine glycosylation sites follow: Asn-38 and Asn-42. A disulfide bond links Cys-43 and Cys-109.

In terms of assembly, alpha-beta TR is a heterodimer composed of an alpha and beta chain; disulfide-linked. The alpha-beta TR is associated with the transmembrane signaling CD3 coreceptor proteins to form the TR-CD3 (TcR or TCR). The assembly of alpha-beta TR heterodimers with CD3 occurs in the endoplasmic reticulum where a single alpha-beta TR heterodimer associates with one CD3D-CD3E heterodimer, one CD3G-CD3E heterodimer and one CD247 homodimer forming a stable octameric structure. CD3D-CD3E and CD3G-CD3E heterodimers preferentially associate with TR alpha and TR beta chains, respectively. The association of the CD247 homodimer is the last step of TcR assembly in the endoplasmic reticulum and is required for transport to the cell surface.

Its subcellular location is the cell membrane. Its function is as follows. V region of the variable domain of T cell receptor (TR) alpha chain that participates in the antigen recognition. Alpha-beta T cell receptors are antigen specific receptors which are essential to the immune response and are present on the cell surface of T lymphocytes. Recognize peptide-major histocompatibility (MH) (pMH) complexes that are displayed by antigen presenting cells (APC), a prerequisite for efficient T cell adaptive immunity against pathogens. Binding of alpha-beta TR to pMH complex initiates TR-CD3 clustering on the cell surface and intracellular activation of LCK that phosphorylates the ITAM motifs of CD3G, CD3D, CD3E and CD247 enabling the recruitment of ZAP70. In turn ZAP70 phosphorylates LAT, which recruits numerous signaling molecules to form the LAT signalosome. The LAT signalosome propagates signal branching to three major signaling pathways, the calcium, the mitogen-activated protein kinase (MAPK) kinase and the nuclear factor NF-kappa-B (NF-kB) pathways, leading to the mobilization of transcription factors that are critical for gene expression and essential for T cell growth and differentiation. The T cell repertoire is generated in the thymus, by V-(D)-J rearrangement. This repertoire is then shaped by intrathymic selection events to generate a peripheral T cell pool of self-MH restricted, non-autoaggressive T cells. Post-thymic interaction of alpha-beta TR with the pMH complexes shapes TR structural and functional avidity. The sequence is that of T cell receptor alpha variable 34 from Homo sapiens (Human).